Consider the following 294-residue polypeptide: uncharacterized protein (294 aa).

Belongs to the glycosyltransferase 2 family. WaaE/KdtX subfamily.

This is an uncharacterized protein from Rickettsia bellii (strain RML369-C).